The primary structure comprises 180 residues: UPF0398 protein EF_1150 (180 aa).

Belongs to the UPF0398 family.

This chain is UPF0398 protein EF_1150, found in Enterococcus faecalis (strain ATCC 700802 / V583).